Consider the following 117-residue polypeptide: Ig heavy chain V region 3 (117 aa).

The first 19 residues, 1–19, serve as a signal peptide directing secretion; the sequence is MGWSCIILFLVATATGVHS. Residues 20–49 are framework-1; sequence QVQLQQPGAELVRPGSSVKLSCKASGYTFT. C41 and C115 form a disulfide bridge. The tract at residues 50 to 54 is complementarity-determining-1; that stretch reads SYWMD. The segment at 55-68 is framework-2; sequence WVKQRPGQGLEWIG. The tract at residues 69-85 is complementarity-determining-2; it reads NIYPSDSETHYNQKFKD. Positions 86 to 117 are framework-3; it reads KATLTVDKSSSTAYMQLSSLTSEDSAVYYCAR.

The chain is Ig heavy chain V region 3 (Ighv1-61) from Mus musculus (Mouse).